The sequence spans 404 residues: Glycosylated lysosomal membrane protein (404 aa).

Positions 1–26 (MSGYEKPSRGWGFCALSPVLLSLLMA) are cleaved as a signal peptide. Residues 27–370 (APLGLLGEET…VDALSPLVLG (344 aa)) lie on the Lumenal side of the membrane. N-linked (GlcNAc...) asparagine glycosylation is found at Asn-63, Asn-132, Asn-157, Asn-185, and Asn-228. The helical transmembrane segment at 371–391 (IMAVALGAPALMLLAGGLFLL) threads the bilayer. Residues 392 to 404 (LGRKRDSEYQSIN) lie on the Cytoplasmic side of the membrane. The Lysosomal targeting motif signature appears at 400–404 (YQSIN).

The protein belongs to the GLMP family. Interacts (via lumenal domain) with lysosomal protein MFSD1; the interaction starts while both proteins are still in the endoplasmic reticulum and is required for stabilization of MFSD1 in lysosomes but has no direct effect on its targeting to lysosomes or transporter activity. In terms of processing, highly N-glycosylated. N-glycosylation is essential for GLMP stability and for MFSD1 lysosomal localization.

It is found in the lysosome membrane. In terms of biological role, required to protect lysosomal transporter MFSD1 from lysosomal proteolysis and for MFSD1 lysosomal localization. The chain is Glycosylated lysosomal membrane protein from Bos taurus (Bovine).